Here is a 180-residue protein sequence, read N- to C-terminus: Signal peptidase complex subunit 2 (180 aa).

The Cytoplasmic portion of the chain corresponds to 1–45; that stretch reads MSDERITVVNKWDGPTVKNGLDEVVKKILNDKVGWTEQHNLMNLR. Residues 46–66 traverse the membrane as a helical segment; the sequence is LLISFIGVAFSAFACGYDFYA. The Lumenal portion of the chain corresponds to 67-72; the sequence is PFPKSK. A helical membrane pass occupies residues 73–93; it reads IVLLVCSVSYFICMGVLQLFQ. Residues 94–180 are Cytoplasmic-facing; the sequence is WYVEKDCFYE…LWARLIRSEQ (87 aa).

The protein belongs to the SPCS2 family. As to quaternary structure, component of the signal peptidase complex (SPC) composed of a catalytic subunit sec-11 and three accessory subunits spcs-1, spcs-2 and spcs-3. The complex induces a local thinning of the ER membrane which is used to measure the length of the signal peptide (SP) h-region of protein substrates. This ensures the selectivity of the complex towards h-regions shorter than 18-20 amino acids.

Its subcellular location is the endoplasmic reticulum membrane. Component of the signal peptidase complex (SPC) which catalyzes the cleavage of N-terminal signal sequences from nascent proteins as they are translocated into the lumen of the endoplasmic reticulum. Enhances the enzymatic activity of SPC and facilitates the interactions between different components of the translocation site. This is Signal peptidase complex subunit 2 from Caenorhabditis briggsae.